The following is a 475-amino-acid chain: Ribulose bisphosphate carboxylase large chain (475 aa).

Residues Asn-123 and Thr-173 each contribute to the substrate site. Lys-175 serves as the catalytic Proton acceptor. Lys-177 is a binding site for substrate. The Mg(2+) site is built by Lys-201, Asp-203, and Glu-204. Residue Lys-201 is modified to N6-carboxylysine. His-294 functions as the Proton acceptor in the catalytic mechanism. Residues Arg-295, His-327, and Ser-379 each contribute to the substrate site.

Belongs to the RuBisCO large chain family. Type I subfamily. Heterohexadecamer of 8 large chains and 8 small chains; disulfide-linked. The disulfide link is formed within the large subunit homodimers. Interacts with assembly factor Raf1 which helps form the holoenzyme, most interaction (and folding) occurs in the cytoplasm. Mg(2+) serves as cofactor. Post-translationally, the disulfide bond which can form in the large chain dimeric partners within the hexadecamer appears to be associated with oxidative stress and protein turnover.

It localises to the carboxysome. The protein resides in the cytoplasm. It carries out the reaction 2 (2R)-3-phosphoglycerate + 2 H(+) = D-ribulose 1,5-bisphosphate + CO2 + H2O. It catalyses the reaction D-ribulose 1,5-bisphosphate + O2 = 2-phosphoglycolate + (2R)-3-phosphoglycerate + 2 H(+). Functionally, ruBisCO catalyzes two reactions: the carboxylation of D-ribulose 1,5-bisphosphate, the primary event in carbon dioxide fixation, as well as the oxidative fragmentation of the pentose substrate in the photorespiration process. Both reactions occur simultaneously and in competition at the same active site. The protein is Ribulose bisphosphate carboxylase large chain of Thermosynechococcus vestitus (strain NIES-2133 / IAM M-273 / BP-1).